The sequence spans 89 residues: MAHKKAGGSSRNGRDSDGRRLGVKKFGGQAVVSGNIIVRQRGTKWHPGTNVGMGKDHTLFALVEGRVEFRTKANDRTYVSVVPALEAAE.

A disordered region spans residues 1–24; it reads MAHKKAGGSSRNGRDSDGRRLGVK.

Belongs to the bacterial ribosomal protein bL27 family.

In Azorhizobium caulinodans (strain ATCC 43989 / DSM 5975 / JCM 20966 / LMG 6465 / NBRC 14845 / NCIMB 13405 / ORS 571), this protein is Large ribosomal subunit protein bL27.